The chain runs to 1030 residues: E3 ubiquitin-protein ligase mib1 (1030 aa).

Residues 6 to 74 (NNRVMMEGVG…AYDVRILDSA (69 aa)) enclose the MIB/HERC2 1 domain. A ZZ-type zinc finger spans residues 80 to 132 (HDGTMCDTCRQQPIIGIRWKCAECTNYDLCTTCYHGDKHHLRHRFYRITTPGS). Positions 85, 88, 100, 103, 109, 112, 118, and 122 each coordinate Zn(2+). Residues 143–221 (SKKITARGIF…MSDLKCVQDA (79 aa)) form the MIB/HERC2 2 domain. ANK repeat units follow at residues 430–460 (DINEELVKAAANGDLAKVEDILKRPDVDVNG), 463–492 (AGHTAMQAASQNGHVDVLKLLLKHSVDLEA), 496–525 (DGDRAVHHASFGDEGSVIEVLHRGGADLNA), 529–558 (RRQTPLHIAVNKGHLQVVKTLLDFGCHPSL), 562–591 (EGDTPLHDAISKKRDDMLSVLLEAGADVTI), 595–627 (NGFNALHHAALRGNPSAMRVLLSKLPRPWIVDE), 631–661 (DGYTALHLAALNNHVEVAELLVHQGNANLDV), 665–694 (NQQTALHLAVERQHTQIVRLLVRAEAKLDV), and 698–727 (DGDTPLHEALRHHTLSQLRQLQDMQDVSKV). 2 RING-type zinc fingers span residues 817-852 (CMVCSDMKRDTLFGPCGHIATCSLCSPRVKKCLICK) and 864-899 (CVVCSDKKAAVLFQPCGHMCACENCASLMKKCVQCR). Positions 957–986 (ALQRDKDNTNVNADVQKLQQQLQDIKEQTM) form a coiled coil. Residues 987–1020 (CPVCLDRLKNMIFMCGHGTCQLCGDRMSECPICR) form an RING-type 3 zinc finger.

In terms of assembly, interacts with deltaA (dla) and deltaD (dld).

It is found in the cytoplasm. The protein localises to the cytoskeleton. Its subcellular location is the microtubule organizing center. The protein resides in the centrosome. It localises to the centriolar satellite. It is found in the cell membrane. It catalyses the reaction S-ubiquitinyl-[E2 ubiquitin-conjugating enzyme]-L-cysteine + [acceptor protein]-L-lysine = [E2 ubiquitin-conjugating enzyme]-L-cysteine + N(6)-ubiquitinyl-[acceptor protein]-L-lysine.. The protein operates within protein modification; protein ubiquitination. In terms of biological role, E3 ubiquitin-protein ligase that mediates ubiquitination of Delta receptors, which act as ligands of Notch proteins. Positively regulates the Delta-mediated Notch signaling by ubiquitinating the intracellular domain of Delta, leading to endocytosis of Delta receptors. It thereby participates in many processes regulated by the Notch signaling pathway, such as midline cell fate specification prior to germ layer formation, patterning of sensory cell differentiation in the ear, neurogenesis of the hindbrain and commitment to a secretory fate in the intestine. Essential for early embryonic development. The protein is E3 ubiquitin-protein ligase mib1 (mib1) of Danio rerio (Zebrafish).